Consider the following 157-residue polypeptide: MPTWHYSYKLRDESRIAKAVQFDIPVSIKDMREAVAAIRGKKVSEAKKLLENVIALREPIPFKRYKGKLSHKRGLPAKWKWPIGRYPVKAAKYLLRLLEHVEANADNKGLDKDKLVIVHIAAHKGMTLKRWMPRAFGRATPKFRRTSHVEIVVKEVD.

It belongs to the universal ribosomal protein uL22 family. As to quaternary structure, part of the 50S ribosomal subunit.

Its function is as follows. This protein binds specifically to 23S rRNA. It makes multiple contacts with different domains of the 23S rRNA in the assembled 50S subunit and ribosome. Functionally, the globular domain of the protein is located near the polypeptide exit tunnel on the outside of the subunit, while an extended beta-hairpin is found that lines the wall of the exit tunnel in the center of the 70S ribosome. The polypeptide is Large ribosomal subunit protein uL22 (Staphylothermus marinus (strain ATCC 43588 / DSM 3639 / JCM 9404 / F1)).